We begin with the raw amino-acid sequence, 732 residues long: Cyclopenase asqI (732 aa).

Zn(2+) contacts are provided by histidine 168, histidine 172, and histidine 200.

Belongs to the tyrosinase family. The cofactor is Zn(2+).

The catalysed reaction is (-)-cyclopenine = viridicatin + methyl isocyanate + H(+). It catalyses the reaction (-)-4'-methoxycyclopenine = 4'-methoxyviridicatin + methyl isocyanate + H(+). The protein operates within secondary metabolite biosynthesis. Its pathway is alkaloid biosynthesis. It participates in mycotoxin biosynthesis. Its function is as follows. Cyclopenase; part of the gene cluster that mediates the biosynthesis of the aspoquinolone mycotoxins. Within the pathway, the cyclopenase asqI catalyzes the conversion of 4'-methoxycyclopenin into 4'-methoxyviridicatin. Cyclopenin can also be converted into viridicatin by asqI. The first step of the pathway is catalyzed by the nonribosomal peptide synthetase asqK that condenses anthranilic acid and O-methyl-L-tyrosine to produce 4'-methoxycyclopeptin. 4'-methoxycyclopeptin is then converted to 4'-methoxydehydrocyclopeptin by the ketoglutarate-dependent dioxygenase asqJ. AsqJ also converts its first product 4'-methoxydehydrocyclopeptin to 4'-methoxycyclopenin. The following conversion of 4'-methoxycyclopenin into 4'-methoxyviridicatin is catalyzed by the cyclopenase asqI. 4'-methoxyviridicatin is the precursor of quinolone natural products, and is further converted to quinolinone B. The prenyltransferase asqH1 then catalyzes the canonical Friedel-Crafts alkylation of quinolinone B with dimethylallyl cation to yield dimethylallyl quinolone, which is subjected to FAD-dependent dehydrogenation by the FAD-linked oxidoreductase asqF to yield conjugated aryl diene. The delta(3') double bond then serves as the site of the second alkylation with DMAPP catalyzed by the prenyltransferase asqH2 to yield a carbenium ion intermediate, which can be attacked by H(2)O to yield a styrenyl quinolone containing a C3'-hydroxyprenyl chain. The FAD-dependent monooxygenase asqG performs epoxidation of the terminal C7'-C8' olefin. Finally, after dehydratation of the epoxide at C3 by asqC, the quinolone epoxide rearrangement protein asqO catalyzes an enzymatic 3-exo-tet cyclization to yield the cyclopropyl-THF ring system in aspoquinolone. This Emericella nidulans (strain FGSC A4 / ATCC 38163 / CBS 112.46 / NRRL 194 / M139) (Aspergillus nidulans) protein is Cyclopenase asqI.